The following is a 349-amino-acid chain: tRNA pseudouridine synthase D (349 aa).

Substrate is bound at residue F26. D79 serves as the catalytic Nucleophile. N128 contributes to the substrate binding site. A TRUD domain is found at 154–302; the sequence is GVPNYFGSQR…VEGSRRAVLL (149 aa). F328 provides a ligand contact to substrate.

This sequence belongs to the pseudouridine synthase TruD family.

The catalysed reaction is uridine(13) in tRNA = pseudouridine(13) in tRNA. Functionally, responsible for synthesis of pseudouridine from uracil-13 in transfer RNAs. The polypeptide is tRNA pseudouridine synthase D (Yersinia pseudotuberculosis serotype IB (strain PB1/+)).